Here is a 261-residue protein sequence, read N- to C-terminus: MWLLILFLILSLGWNDAAPPGQSRIIGGFNCEKNSQPWQVAVYHFNEPQCGGVLIHPSWVITAAHCYSVNYQVWLGRNNLLEDEPFAQHRLVSQSFPHPGFNLDIIKNHTRKPGNDYSNDLMLLHLKTPADITDGVKVIDLPTEEPKVGSTCLTSGWGSITPLKWEFPDDLQCVNIHLLSNEKCIKAYNDEVTDVMLCAGEMDGGKDICKGDSGGPLICDGVLQGITSWGSMPCGEPNKPSVYTKLIKFTSWMKKVMKENP.

The signal sequence occupies residues 1–18 (MWLLILFLILSLGWNDAA). Residues 19–24 (PPGQSR) constitute a propeptide, activation peptide. The Peptidase S1 domain occupies 25 to 258 (IIGGFNCEKN…FTSWMKKVMK (234 aa)). Cystine bridges form between Cys31/Cys173, Cys50/Cys66, Cys152/Cys219, Cys184/Cys198, and Cys209/Cys234. His65 acts as the Charge relay system in catalysis. N-linked (GlcNAc...) asparagine glycosylation occurs at Asn108. Asp120 serves as the catalytic Charge relay system. Ser213 functions as the Charge relay system in the catalytic mechanism.

This sequence belongs to the peptidase S1 family. Kallikrein subfamily.

It carries out the reaction Preferential cleavage of Arg-|-Xaa bonds in small molecule substrates. Highly selective action to release kallidin (lysyl-bradykinin) from kininogen involves hydrolysis of Met-|-Xaa or Leu-|-Xaa.. In terms of biological role, glandular kallikreins cleave Met-Lys and Arg-Ser bonds in kininogen to release Lys-bradykinin. The polypeptide is Prostatic glandular kallikrein-6 (Klk6) (Rattus norvegicus (Rat)).